The chain runs to 217 residues: Probable GTP-binding protein EngB (217 aa).

In terms of domain architecture, EngB-type G spans 31–205 (VGVEIAFAGR…LAILDAWCHP (175 aa)). Residues 39–46 (GRSNAGKS), 66–70 (GRTQL), 84–87 (DLPG), 151–154 (TKAD), and 184–186 (FSA) contribute to the GTP site. The Mg(2+) site is built by Ser-46 and Thr-68.

The protein belongs to the TRAFAC class TrmE-Era-EngA-EngB-Septin-like GTPase superfamily. EngB GTPase family. Mg(2+) is required as a cofactor.

Its function is as follows. Necessary for normal cell division and for the maintenance of normal septation. This is Probable GTP-binding protein EngB from Shewanella amazonensis (strain ATCC BAA-1098 / SB2B).